A 294-amino-acid polypeptide reads, in one-letter code: 4-hydroxy-tetrahydrodipicolinate synthase (294 aa).

A pyruvate-binding site is contributed by threonine 45. Catalysis depends on tyrosine 133, which acts as the Proton donor/acceptor. Lysine 161 (schiff-base intermediate with substrate) is an active-site residue. Residue isoleucine 203 participates in pyruvate binding.

Belongs to the DapA family. Homotetramer; dimer of dimers.

It is found in the cytoplasm. The catalysed reaction is L-aspartate 4-semialdehyde + pyruvate = (2S,4S)-4-hydroxy-2,3,4,5-tetrahydrodipicolinate + H2O + H(+). It functions in the pathway amino-acid biosynthesis; L-lysine biosynthesis via DAP pathway; (S)-tetrahydrodipicolinate from L-aspartate: step 3/4. In terms of biological role, catalyzes the condensation of (S)-aspartate-beta-semialdehyde [(S)-ASA] and pyruvate to 4-hydroxy-tetrahydrodipicolinate (HTPA). This Buchnera aphidicola subsp. Acyrthosiphon pisum (strain APS) (Acyrthosiphon pisum symbiotic bacterium) protein is 4-hydroxy-tetrahydrodipicolinate synthase.